The sequence spans 281 residues: Probable endonuclease 4 (281 aa).

9 residues coordinate Zn(2+): His70, His110, Glu146, Asp180, His183, His217, Asp230, His232, and Glu262.

The protein belongs to the AP endonuclease 2 family. Requires Zn(2+) as cofactor.

The catalysed reaction is Endonucleolytic cleavage to 5'-phosphooligonucleotide end-products.. Functionally, endonuclease IV plays a role in DNA repair. It cleaves phosphodiester bonds at apurinic or apyrimidinic (AP) sites, generating a 3'-hydroxyl group and a 5'-terminal sugar phosphate. The sequence is that of Probable endonuclease 4 from Nitratiruptor sp. (strain SB155-2).